Here is a 171-residue protein sequence, read N- to C-terminus: Co-chaperone protein HscB (171 aa).

The 73-residue stretch at 2–74 (DYFTLFGLPA…LTRAEYLLSL (73 aa)) folds into the J domain.

This sequence belongs to the HscB family. As to quaternary structure, interacts with HscA and stimulates its ATPase activity. Interacts with IscU.

In terms of biological role, co-chaperone involved in the maturation of iron-sulfur cluster-containing proteins. Seems to help targeting proteins to be folded toward HscA. The sequence is that of Co-chaperone protein HscB from Salmonella heidelberg (strain SL476).